We begin with the raw amino-acid sequence, 835 residues long: MIGILKKVFDVNQRQIKRMQKTVEQIDALESSIKPLTDEQLKGKTLEFKERLTKGETVDDLLPEAFAVVREAATRVLGMRPYGVQLMGGIALHEGNISEMKTGEGKTLTSTLPVYLNALTGKGVHVVTVNEYLAQRDANEMGQLHEFLGLTVGINLNSMSREEKQEAYAADITYSTNNELGFDYLRDNMVLYKEQCVQRPLHFAIIDEVDSILVDEARTPLIISGQAQKSTELYMFANAFVRTLENEKEYSFDVKTKNVMLTEDGITKAEKAFHIENLFDLKHVALLHHINQGLRAHVVMHRDTDYVVQEGEIVIVDQFTGRLMKGRRYSEGLHQAIEAKEGVEIQNESMTLATITFQNYFRMYEKLSGMTGTAKTEEEEFRNIYNMNVIVIPTNKPIIRDDRADLIFKSMEGKFNAVVEDIVNRHKQGQPVLVGTVAIETSELISKMLTRKGVRHNILNAKNHAREADIIAEAGMKGAVTIATNMAGRGTDIKLGDDVKIFGLAVIGTERHESRRIDNQLRGRAGRQGDPGVTQFYLSMEDELMRRFGSDNMKAMMDRLGMDDSQPIESKMVSRAVESAQKRVEGNNYDARKQLLQYDDVLRQQREVIYKQRQEVMESENLRGIIEGMMKSTVERAVALHTQEEIEEDWNIKGLVDYLNTNLLQEGDVKEEELRRLAPEEMSEPIIAKLIERYNDKEKLMPEEQMREFEKVVVFRVVDTKWTEHIDAMDHLREGIHLRAYGQIDPLREYQMEGFAMFESMVASIEEEISRYIMKAEIEQNLERQEVVQGEAVHPSSDGEEAKKKPVVKGDQVGRNDLCKCGSGKKYKNCCGIVQ.

ATP-binding positions include Gln-85, 103–107 (GEGKT), and Asp-492. The segment at 788-807 (VQGEAVHPSSDGEEAKKKPV) is disordered. Positions 819, 821, 830, and 831 each coordinate Zn(2+).

This sequence belongs to the SecA family. Monomer and homodimer. Part of the essential Sec protein translocation apparatus which comprises SecA, SecYEG and auxiliary proteins SecDF. Other proteins may also be involved. Requires Zn(2+) as cofactor.

It localises to the cell membrane. Its subcellular location is the cytoplasm. The catalysed reaction is ATP + H2O + cellular proteinSide 1 = ADP + phosphate + cellular proteinSide 2.. Functionally, part of the Sec protein translocase complex. Interacts with the SecYEG preprotein conducting channel. Has a central role in coupling the hydrolysis of ATP to the transfer of proteins into and across the cell membrane, serving as an ATP-driven molecular motor driving the stepwise translocation of polypeptide chains across the membrane. This chain is Protein translocase subunit SecA, found in Bacillus cereus (strain G9842).